The following is a 1059-amino-acid chain: Isoleucine--tRNA ligase (1059 aa).

The 'HIGH' region signature appears at 47–57 (PYTSGQMHLGT). The short motif at 606 to 610 (KMSKS) is the 'KMSKS' region element. Lys609 contributes to the ATP binding site.

Belongs to the class-I aminoacyl-tRNA synthetase family. IleS type 2 subfamily. In terms of assembly, monomer. It depends on Zn(2+) as a cofactor.

The protein resides in the cytoplasm. It carries out the reaction tRNA(Ile) + L-isoleucine + ATP = L-isoleucyl-tRNA(Ile) + AMP + diphosphate. In terms of biological role, catalyzes the attachment of isoleucine to tRNA(Ile). As IleRS can inadvertently accommodate and process structurally similar amino acids such as valine, to avoid such errors it has two additional distinct tRNA(Ile)-dependent editing activities. One activity is designated as 'pretransfer' editing and involves the hydrolysis of activated Val-AMP. The other activity is designated 'posttransfer' editing and involves deacylation of mischarged Val-tRNA(Ile). In Haloquadratum walsbyi (strain DSM 16790 / HBSQ001), this protein is Isoleucine--tRNA ligase.